Here is a 218-residue protein sequence, read N- to C-terminus: N-(5'-phosphoribosyl)anthranilate isomerase (218 aa).

This sequence belongs to the TrpF family.

It carries out the reaction N-(5-phospho-beta-D-ribosyl)anthranilate = 1-(2-carboxyphenylamino)-1-deoxy-D-ribulose 5-phosphate. It participates in amino-acid biosynthesis; L-tryptophan biosynthesis; L-tryptophan from chorismate: step 3/5. This is N-(5'-phosphoribosyl)anthranilate isomerase from Bacillus licheniformis (strain ATCC 14580 / DSM 13 / JCM 2505 / CCUG 7422 / NBRC 12200 / NCIMB 9375 / NCTC 10341 / NRRL NRS-1264 / Gibson 46).